A 459-amino-acid chain; its full sequence is Vacuolar fusion protein CCZ1 homolog (459 aa).

This sequence belongs to the CCZ1 family.

This chain is Vacuolar fusion protein CCZ1 homolog, found in Nematostella vectensis (Starlet sea anemone).